Consider the following 507-residue polypeptide: Putative pentatricopeptide repeat-containing protein At3g16710, mitochondrial (507 aa).

The N-terminal 48 residues, 1–48 (MRRSIATGFASIVKGFHLHSHRHRLQISNPRTAASLSLCGFCFWIRAF), are a transit peptide targeting the mitochondrion. PPR repeat units follow at residues 47–81 (AFSSYRKILRNGLHNLQFNDALDLFTRMVHSRPLP), 82–116 (SIIDFTRLLSVIAKMNRYDVVISLFEQMQILGIPP), 117–151 (LLCTCNIVMHCVCLSSQPCRASCFLGKMMKLGFEP), 152–186 (DLVTFTSLLNGYCHWNRIEDAIALFDQILGMGFKP), 187–221 (NVVTYTTLIRCLCKNRHLNHAVELFNQMGTNGSRP), 222–256 (NVVTYNALVTGLCEIGRWGDAAWLLRDMMKRRIEP), 257–291 (NVITFTALIDAFVKVGKLMEAKELYNVMIQMSVYP), 292–326 (DVFTYGSLINGLCMYGLLDEARQMFYLMERNGCYP), 327–361 (NEVIYTTLIHGFCKSKRVEDGMKIFYEMSQKGVVA), 362–396 (NTITYTVLIQGYCLVGRPDVAQEVFNQMSSRRAPP), 397–431 (DIRTYNVLLDGLCCNGKVEKALMIFEYMRKREMDI), 432–466 (NIVTYTIIIQGMCKLGKVEDAFDLFCSLFSKGMKP), and 467–501 (NVITYTTMISGFCRRGLIHEADSLFKKMKEDGFLP).

Belongs to the PPR family. P subfamily.

Its subcellular location is the mitochondrion. The chain is Putative pentatricopeptide repeat-containing protein At3g16710, mitochondrial from Arabidopsis thaliana (Mouse-ear cress).